The following is a 234-amino-acid chain: Proteasome subunit alpha (234 aa).

This sequence belongs to the peptidase T1A family. In terms of assembly, the 20S proteasome core is composed of 14 alpha and 14 beta subunits that assemble into four stacked heptameric rings, resulting in a barrel-shaped structure. The two inner rings, each composed of seven catalytic beta subunits, are sandwiched by two outer rings, each composed of seven alpha subunits. The catalytic chamber with the active sites is on the inside of the barrel. Has a gated structure, the ends of the cylinder being occluded by the N-termini of the alpha-subunits. Is capped by the proteasome-associated ATPase, ARC.

The protein resides in the cytoplasm. It participates in protein degradation; proteasomal Pup-dependent pathway. With respect to regulation, the formation of the proteasomal ATPase ARC-20S proteasome complex, likely via the docking of the C-termini of ARC into the intersubunit pockets in the alpha-rings, may trigger opening of the gate for substrate entry. Interconversion between the open-gate and close-gate conformations leads to a dynamic regulation of the 20S proteasome proteolysis activity. Component of the proteasome core, a large protease complex with broad specificity involved in protein degradation. This chain is Proteasome subunit alpha, found in Acidothermus cellulolyticus (strain ATCC 43068 / DSM 8971 / 11B).